Here is a 327-residue protein sequence, read N- to C-terminus: Lipoyl synthase (327 aa).

Cysteine 66, cysteine 71, cysteine 77, cysteine 92, cysteine 96, cysteine 99, and serine 306 together coordinate [4Fe-4S] cluster. Positions 78–295 (FSKGTATFMI…EKEAYELGFS (218 aa)) constitute a Radical SAM core domain.

The protein belongs to the radical SAM superfamily. Lipoyl synthase family. The cofactor is [4Fe-4S] cluster.

Its subcellular location is the cytoplasm. It catalyses the reaction [[Fe-S] cluster scaffold protein carrying a second [4Fe-4S](2+) cluster] + N(6)-octanoyl-L-lysyl-[protein] + 2 oxidized [2Fe-2S]-[ferredoxin] + 2 S-adenosyl-L-methionine + 4 H(+) = [[Fe-S] cluster scaffold protein] + N(6)-[(R)-dihydrolipoyl]-L-lysyl-[protein] + 4 Fe(3+) + 2 hydrogen sulfide + 2 5'-deoxyadenosine + 2 L-methionine + 2 reduced [2Fe-2S]-[ferredoxin]. The protein operates within protein modification; protein lipoylation via endogenous pathway; protein N(6)-(lipoyl)lysine from octanoyl-[acyl-carrier-protein]: step 2/2. In terms of biological role, catalyzes the radical-mediated insertion of two sulfur atoms into the C-6 and C-8 positions of the octanoyl moiety bound to the lipoyl domains of lipoate-dependent enzymes, thereby converting the octanoylated domains into lipoylated derivatives. This chain is Lipoyl synthase, found in Neisseria meningitidis serogroup B (strain ATCC BAA-335 / MC58).